The following is a 153-amino-acid chain: UPF0260 protein YcgN (153 aa).

The protein belongs to the UPF0260 family.

In Shigella boydii serotype 18 (strain CDC 3083-94 / BS512), this protein is UPF0260 protein YcgN.